Reading from the N-terminus, the 77-residue chain is Conotoxin ArMSGL-0143 (77 aa).

A signal peptide spans 1 to 22 (MSGLGIMLLTLLLLVFMETSHQ). Residues 23–44 (DAGEKQATQRDAINVRRRRSLT) constitute a propeptide that is removed on maturation. 3 disulfides stabilise this stretch: cysteine 51–cysteine 63, cysteine 55–cysteine 71, and cysteine 62–cysteine 75. Phenylalanine 76 is subject to Phenylalanine amide.

It belongs to the conotoxin O3 superfamily. As to expression, expressed by the venom duct.

The protein resides in the secreted. This is Conotoxin ArMSGL-0143 from Conus arenatus (Sand-dusted cone).